The primary structure comprises 242 residues: Small ribosomal subunit protein uS3 (242 aa).

The KH type-2 domain occupies 39–110; it reads IRRFIHKKYG…QVRINVVEVE (72 aa). Positions 217–242 are disordered; the sequence is TMPVGASPRRRGNRRPQQFEDRSNEG. Residues 233-242 show a composition bias toward basic and acidic residues; sequence QQFEDRSNEG.

This sequence belongs to the universal ribosomal protein uS3 family. Part of the 30S ribosomal subunit. Forms a tight complex with proteins S10 and S14.

Functionally, binds the lower part of the 30S subunit head. Binds mRNA in the 70S ribosome, positioning it for translation. The chain is Small ribosomal subunit protein uS3 from Prochlorococcus marinus (strain MIT 9313).